Consider the following 189-residue polypeptide: Flavin prenyltransferase UbiX (189 aa).

FMN-binding positions include 10 to 12 (GAS), serine 36, 91 to 94 (STNT), and arginine 126. Dimethylallyl phosphate is bound by residues tyrosine 156 and lysine 172.

The protein belongs to the UbiX/PAD1 family.

The enzyme catalyses dimethylallyl phosphate + FMNH2 = prenylated FMNH2 + phosphate. Its function is as follows. Flavin prenyltransferase that catalyzes the synthesis of the prenylated FMN cofactor (prenyl-FMN) for 4-hydroxy-3-polyprenylbenzoic acid decarboxylase UbiD. The prenyltransferase is metal-independent and links a dimethylallyl moiety from dimethylallyl monophosphate (DMAP) to the flavin N5 and C6 atoms of FMN. The chain is Flavin prenyltransferase UbiX from Aquifex aeolicus (strain VF5).